A 289-amino-acid polypeptide reads, in one-letter code: ATP synthase subunit a (289 aa).

6 helical membrane-spanning segments follow: residues A43–F63, S101–V121, L160–I180, L193–A213, V232–V252, and A259–V279.

The protein belongs to the ATPase A chain family. F-type ATPases have 2 components, CF(1) - the catalytic core - and CF(0) - the membrane proton channel. CF(1) has five subunits: alpha(3), beta(3), gamma(1), delta(1), epsilon(1). CF(0) has three main subunits: a(1), b(2) and c(9-12). The alpha and beta chains form an alternating ring which encloses part of the gamma chain. CF(1) is attached to CF(0) by a central stalk formed by the gamma and epsilon chains, while a peripheral stalk is formed by the delta and b chains.

It localises to the cell inner membrane. Its function is as follows. Key component of the proton channel; it plays a direct role in the translocation of protons across the membrane. This chain is ATP synthase subunit a, found in Pseudomonas syringae pv. syringae (strain B728a).